The chain runs to 584 residues: Putative poly(A) polymerase catalytic subunit (584 aa).

The segment covering E522–T531 has biased composition (basic and acidic residues). The tract at residues E522–D584 is disordered. Over residues S546 to N569 the composition is skewed to low complexity.

This sequence belongs to the poxviridae poly(A) polymerase catalytic subunit family. Highly divergent.

Its subcellular location is the virion. It carries out the reaction RNA(n) + ATP = RNA(n)-3'-adenine ribonucleotide + diphosphate. Its function is as follows. Polymerase that creates the 3'-poly(A) tail of mRNA's. This chain is Putative poly(A) polymerase catalytic subunit, found in Acanthamoeba polyphaga (Amoeba).